The primary structure comprises 238 residues: Small ribosomal subunit protein uS2 (238 aa).

This sequence belongs to the universal ribosomal protein uS2 family.

This is Small ribosomal subunit protein uS2 from Prochlorococcus marinus (strain SARG / CCMP1375 / SS120).